The following is a 265-amino-acid chain: Aquaporin-5 (265 aa).

Residues 1-12 (MKKEVCSVAFLK) are Cytoplasmic-facing. Residues 13 to 33 (AVFAEFLATLIFVFFGLGSAL) form a helical membrane-spanning segment. Over 34–39 (KWPSAL) the chain is Extracellular. A helical membrane pass occupies residues 40–60 (PTILQIALAFGLAIGTLAQAL). At 61–65 (GPVSG) the chain is on the cytoplasmic side. An intramembrane region (discontinuously helical) is located at residues 66–74 (GHINPAITL). Residues 69-71 (NPA) carry the NPA 1 motif. Over 75–87 (ALLVGNQISLLRA) the chain is Cytoplasmic. Residues 88 to 108 (FFYVAAQLVGAIAGAGILYGV) form a helical membrane-spanning segment. The Extracellular segment spans residues 109–126 (APLNARGNLAVNALNNNT). N-linked (GlcNAc...) asparagine glycans are attached at residues Asn-124 and Asn-125. Residues 127–147 (TQGQAMVVELILTFQLALCIF) traverse the membrane as a helical segment. The Cytoplasmic segment spans residues 148-158 (ASTDSRRTSPV). Residues 159–179 (GSPALSIGLSVTLGHLVGIYF) traverse the membrane as a helical segment. Thr-180 is a topological domain (extracellular). The discontinuously helical intramembrane region spans 181–191 (GCSMNPARSFG). Positions 185–187 (NPA) match the NPA 2 motif. Over 192–203 (PAVVMNRFSPAH) the chain is Extracellular. Residues 204 to 224 (WVFWVGPIVGAVLAAILYFYL) traverse the membrane as a helical segment. Over 225 to 265 (LFPNSLSLSERVAIIKGTYEPDEDWEEQREERKKTMELTTR) the chain is Cytoplasmic.

This sequence belongs to the MIP/aquaporin (TC 1.A.8) family. In terms of assembly, homotetramer; each monomer provides an independent water pore. Interacts with TRPV4; the interaction is probably indirect and regulates TRPV4 activation by hypotonicity. In terms of tissue distribution, detected in skin eccrine sweat glands, at the apical cell membrane and at intercellular canaliculi (at protein level).

Its subcellular location is the apical cell membrane. The protein resides in the cell membrane. The protein localises to the cytoplasmic vesicle membrane. The enzyme catalyses H2O(in) = H2O(out). Aquaporins form homotetrameric transmembrane channels, with each monomer independently mediating water transport across the plasma membrane along its osmotic gradient. Plays an important role in fluid secretion in salivary glands. Required for TRPV4 activation by hypotonicity. Together with TRPV4, controls regulatory volume decrease in salivary epithelial cells. Seems to play a redundant role in water transport in the eye, lung and in sweat glands. The sequence is that of Aquaporin-5 from Homo sapiens (Human).